A 94-amino-acid polypeptide reads, in one-letter code: Small ribosomal subunit protein uS19 (94 aa).

Belongs to the universal ribosomal protein uS19 family.

Functionally, protein S19 forms a complex with S13 that binds strongly to the 16S ribosomal RNA. This is Small ribosomal subunit protein uS19 from Moorella thermoacetica (strain ATCC 39073 / JCM 9320).